The primary structure comprises 135 residues: ATP synthase epsilon chain (135 aa).

This sequence belongs to the ATPase epsilon chain family. In terms of assembly, F-type ATPases have 2 components, CF(1) - the catalytic core - and CF(0) - the membrane proton channel. CF(1) has five subunits: alpha(3), beta(3), gamma(1), delta(1), epsilon(1). CF(0) has three main subunits: a, b and c.

It is found in the cell inner membrane. Its function is as follows. Produces ATP from ADP in the presence of a proton gradient across the membrane. The polypeptide is ATP synthase epsilon chain (Rhizobium leguminosarum bv. trifolii (strain WSM2304)).